Here is a 194-residue protein sequence, read N- to C-terminus: FMN-dependent NADH:quinone oxidoreductase (194 aa).

FMN is bound by residues Ser-10 and 90-93; that span reads MYNL.

It belongs to the azoreductase type 1 family. In terms of assembly, homodimer. The cofactor is FMN.

It catalyses the reaction 2 a quinone + NADH + H(+) = 2 a 1,4-benzosemiquinone + NAD(+). The enzyme catalyses N,N-dimethyl-1,4-phenylenediamine + anthranilate + 2 NAD(+) = 2-(4-dimethylaminophenyl)diazenylbenzoate + 2 NADH + 2 H(+). Functionally, quinone reductase that provides resistance to thiol-specific stress caused by electrophilic quinones. In terms of biological role, also exhibits azoreductase activity. Catalyzes the reductive cleavage of the azo bond in aromatic azo compounds to the corresponding amines. The chain is FMN-dependent NADH:quinone oxidoreductase from Haemophilus influenzae (strain PittEE).